Reading from the N-terminus, the 86-residue chain is Large ribosomal subunit protein bL27 (86 aa).

The span at 1–10 (MAQKKGGGST) shows a compositional bias: gly residues. The interval 1 to 20 (MAQKKGGGSTRNGRDSESKR) is disordered.

The protein belongs to the bacterial ribosomal protein bL27 family.

The protein is Large ribosomal subunit protein bL27 of Bordetella parapertussis (strain 12822 / ATCC BAA-587 / NCTC 13253).